Consider the following 520-residue polypeptide: Laccase (520 aa).

The first 21 residues, 1–21, serve as a signal peptide directing secretion; it reads MSRFQSLLAFVVASLAAVAHA. Plastocyanin-like domains follow at residues 23-148 and 160-302; these read IGPT…FVVY and VDND…ILRY. N-linked (GlcNAc...) asparagine glycans are attached at residues Asn72 and Asn75. Cu cation is bound by residues His85, His87, His130, and His132. 2 cysteine pairs are disulfide-bonded: Cys106/Cys509 and Cys138/Cys226. 3 N-linked (GlcNAc...) asparagine glycosylation sites follow: Asn210, Asn229, and Asn354. Residues 369-491 form the Plastocyanin-like 3 domain; it reads TVPVLLQIIS…AGFAVVFAED (123 aa). The Cu cation site is built by His416, His419, His421, His473, Cys474, His475, and His479.

The protein belongs to the multicopper oxidase family. The cofactor is Cu cation.

It localises to the secreted. It carries out the reaction 4 hydroquinone + O2 = 4 benzosemiquinone + 2 H2O. Lignin degradation and detoxification of lignin-derived products. Has activity towards guaiacol. The protein is Laccase of Trametes hirsuta (White-rot fungus).